We begin with the raw amino-acid sequence, 271 residues long: Ferric enterobactin transport ATP-binding protein FepC (271 aa).

Residues 8–244 enclose the ABC transporter domain; it reads LRGEQLTLGY…ELIERIYGLR (237 aa). 40–47 serves as a coordination point for ATP; the sequence is GPNGCGKS.

It belongs to the ABC transporter superfamily. The complex is composed of two ATP-binding proteins (FepC), two transmembrane proteins (FepD and FepG) and a solute-binding protein (FepB).

Its subcellular location is the cell inner membrane. It carries out the reaction Fe(III)-enterobactin(out) + ATP + H2O = Fe(III)-enterobactin(in) + ADP + phosphate + H(+). Functionally, part of the ABC transporter complex FepBDGC involved in ferric enterobactin uptake. Responsible for energy coupling to the transport system. The sequence is that of Ferric enterobactin transport ATP-binding protein FepC (fepC) from Escherichia coli (strain K12).